Consider the following 258-residue polypeptide: Polysialic acid transport protein KpsM (258 aa).

Residues 1–30 are Cytoplasmic-facing; sequence MARSGFEVQKVTVEALFLREIRTRFGKFRL. Positions 30–251 constitute an ABC transmembrane type-2 domain; the sequence is LGYLWAILEP…FIGLALYRTR (222 aa). The chain crosses the membrane as a helical span at residues 31–54; sequence GYLWAILEPSAHLLILLGILGYVM. Residues 55-61 lie on the Periplasmic side of the membrane; that stretch reads HRTMPDI. Residues 62–81 traverse the membrane as a helical segment; sequence SFPVFLLNGLIPFFIFSSIS. Residues 82 to 108 lie on the Cytoplasmic side of the membrane; the sequence is KRSIGAIEANQGLFNYRPVKPIDTIIA. The helical transmembrane segment at 109–132 threads the bilayer; it reads RALLETLIYVAVYILLMLIVWMTG. Topologically, residues 133 to 143 are periplasmic; that stretch reads EYFEITNFLQL. A helical membrane pass occupies residues 144-165; the sequence is VLTWSLLIILSCGVGLIFMVVG. Topologically, residues 166 to 174 are cytoplasmic; the sequence is KTFPEMQKV. A helical transmembrane segment spans residues 175 to 195; it reads LPILLKPLYFISCIMFPLHSI. Residues 196–226 lie on the Periplasmic side of the membrane; it reads PKQYWSYLLWNPLVHVVELSREAVMPGYISE. The chain crosses the membrane as a helical span at residues 227-247; the sequence is GVSLNYLAMFTLVTLFIGLAL. The Cytoplasmic segment spans residues 248–258; it reads YRTREEAMLTS.

It belongs to the ABC-2 integral membrane protein family.

The protein resides in the cell inner membrane. KpsM and KpsT constitute a system for the transport of polysialic acid across the cytoplasmic membrane. The protein is Polysialic acid transport protein KpsM (kpsM) of Escherichia coli.